We begin with the raw amino-acid sequence, 209 residues long: Peptide methionine sulfoxide reductase MsrA (209 aa).

The active site involves Cys-14. A disordered region spans residues 183-209 (FSALTTGGNQPGARGGLTNNTCQHPRH). Residues 199 to 209 (LTNNTCQHPRH) are compositionally biased toward polar residues.

This sequence belongs to the MsrA Met sulfoxide reductase family.

The enzyme catalyses L-methionyl-[protein] + [thioredoxin]-disulfide + H2O = L-methionyl-(S)-S-oxide-[protein] + [thioredoxin]-dithiol. The catalysed reaction is [thioredoxin]-disulfide + L-methionine + H2O = L-methionine (S)-S-oxide + [thioredoxin]-dithiol. Has an important function as a repair enzyme for proteins that have been inactivated by oxidation. Catalyzes the reversible oxidation-reduction of methionine sulfoxide in proteins to methionine. The protein is Peptide methionine sulfoxide reductase MsrA of Pseudomonas fluorescens.